The sequence spans 517 residues: Ladinin-1 (517 aa).

The interval 1-401 (MAVSRKDWSA…SASMKLPDNT (401 aa)) is disordered. Ser-38 bears the Phosphoserine mark. The segment covering 48–58 (LSQNGDRQASA) has biased composition (polar residues). Phosphoserine is present on residues Ser-64, Ser-78, Ser-121, and Ser-123. Over residues 120 to 131 (NSLSPVQATQKP) the composition is skewed to polar residues. Basic and acidic residues-rich tracts occupy residues 134 to 151 (SKKELEIPPRRRLSREQR) and 161 to 174 (LVGREPEERKKGVP). SEK repeat units follow at residues 203-205 (SEK), 209-211 (SEK), 215-217 (SEK), 221-223 (SEK), 227-229 (SEK), 239-241 (SEK), 257-259 (SEK), and 269-271 (SEK). An 8 X SEK repeats region spans residues 203-271 (SEKVLASEKT…IFEKALASEK (69 aa)). The span at 219–233 (AVSEKRNSSEKKSVL) shows a compositional bias: basic and acidic residues. Ser-347, Ser-356, and Ser-394 each carry phosphoserine. Positions 355–373 (SSPTQRTYSSSLKRSSPRT) are enriched in polar residues. Arg-424 is modified (omega-N-methylarginine). The disordered stretch occupies residues 481–517 (RTQESGDQDPQEAQKASSATERTQWGQKSDSSLDAEV). Residue Ser-485 is modified to Phosphoserine. Polar residues predominate over residues 494-517 (QKASSATERTQWGQKSDSSLDAEV).

The protein resides in the secreted. It is found in the extracellular space. The protein localises to the extracellular matrix. Its subcellular location is the basement membrane. In terms of biological role, anchoring filament protein which is a component of the basement membrane zone. The sequence is that of Ladinin-1 (LAD1) from Homo sapiens (Human).